The primary structure comprises 537 residues: tRNA(His) guanylyltransferase 2 (537 aa).

Mg(2+) contacts are provided by D307, G308, and D354. GTP is bound by residues 307–312 (DGCHFH) and 353–354 (SD).

Belongs to the tRNA(His) guanylyltransferase family. It depends on Mg(2+) as a cofactor.

It is found in the nucleus. The protein resides in the nucleoplasm. The enzyme catalyses a 5'-end ribonucleotide-tRNA(His) + GTP + ATP + H2O = a 5'-end phospho-guanosine-ribonucleotide-tRNA(His) + AMP + 2 diphosphate + H(+). Its function is as follows. Adds a GMP to the 5'-end of tRNA(His) after transcription and RNase P cleavage. In Arabidopsis thaliana (Mouse-ear cress), this protein is tRNA(His) guanylyltransferase 2 (THG2).